A 433-amino-acid chain; its full sequence is Casein kinase 1-like protein 5 (433 aa).

A Protein kinase domain is found at 9–278 (FRLGRKIGSG…LKRLFRNLFI (270 aa)). Residues 15 to 23 (IGSGSFGEI) and K38 each bind ATP. D128 functions as the Proton acceptor in the catalytic mechanism. Residues 297–433 (QSQSGNPQPR…DDVEPQSKAL (137 aa)) are disordered. The span at 342–359 (LKQKDKNGNDSAIAKDKL) shows a compositional bias: basic and acidic residues. Over residues 362–375 (GSLNLGRSEGSSSR) the composition is skewed to low complexity. The residue at position 390 (S390) is a Phosphoserine. Over residues 407 to 423 (INNNAGDETAATPQSNG) the composition is skewed to polar residues.

The protein belongs to the protein kinase superfamily. CK1 Ser/Thr protein kinase family. Casein kinase I subfamily. As to quaternary structure, monomer. In terms of processing, autophosphorylated.

Its subcellular location is the cytoplasm. It catalyses the reaction L-seryl-[protein] + ATP = O-phospho-L-seryl-[protein] + ADP + H(+). It carries out the reaction L-threonyl-[protein] + ATP = O-phospho-L-threonyl-[protein] + ADP + H(+). In terms of biological role, casein kinases are operationally defined by their preferential utilization of acidic proteins such as caseins as substrates. It can phosphorylate a large number of proteins. This chain is Casein kinase 1-like protein 5, found in Arabidopsis thaliana (Mouse-ear cress).